The sequence spans 170 residues: Large ribosomal subunit protein uL10 (170 aa).

Belongs to the universal ribosomal protein uL10 family. Part of the ribosomal stalk of the 50S ribosomal subunit. The N-terminus interacts with L11 and the large rRNA to form the base of the stalk. The C-terminus forms an elongated spine to which L12 dimers bind in a sequential fashion forming a multimeric L10(L12)X complex.

Functionally, forms part of the ribosomal stalk, playing a central role in the interaction of the ribosome with GTP-bound translation factors. This is Large ribosomal subunit protein uL10 from Chlamydia felis (strain Fe/C-56) (Chlamydophila felis).